The chain runs to 357 residues: Peptide chain release factor 1 (357 aa).

At Q232 the chain carries N5-methylglutamine. The segment covering 284–304 (AERAAERKGQIGSGDRSERIR) has biased composition (basic and acidic residues). Residues 284–308 (AERAAERKGQIGSGDRSERIRTYNY) are disordered.

This sequence belongs to the prokaryotic/mitochondrial release factor family. In terms of processing, methylated by PrmC. Methylation increases the termination efficiency of RF1.

It is found in the cytoplasm. Its function is as follows. Peptide chain release factor 1 directs the termination of translation in response to the peptide chain termination codons UAG and UAA. The chain is Peptide chain release factor 1 from Maricaulis maris (strain MCS10) (Caulobacter maris).